A 347-amino-acid polypeptide reads, in one-letter code: UDP-galactose/UDP-glucose transporter 5 (347 aa).

A run of 8 helical transmembrane segments spans residues 17–37, 57–77, 116–136, 143–163, 177–197, 218–238, 247–267, and 293–313; these read LWKAVFAISGIMLTLVIYGLL, LFLVFCNRLTTSAVSAAALLA, VQTLAKCAKMIPVMVWGTLIM, FDYLVAFLVTLGCSVFILFPA, TVWGVSLMVGYLGFDGFTSTF, ICSSILSFTGLILQGHLLPAV, CLFDIALLSTVATASQFFISY, and CIWFSHPLSWEQCIGSVIVFG. The disordered stretch occupies residues 325-347; it reads SEKPPAAQELPRDEEAQPLKGNP.

Belongs to the nucleotide-sugar transporter family. UDP-galactose:UMP antiporter (TC 2.A.7.11) subfamily.

Its subcellular location is the membrane. In terms of biological role, sugar transporter involved in the transport of nucleotide-sugars from cytoplasm into the Golgi and/or the endoplasmic reticulum. The chain is UDP-galactose/UDP-glucose transporter 5 from Arabidopsis thaliana (Mouse-ear cress).